The sequence spans 218 residues: E3 ubiquitin-protein ligase MARCHF3 (218 aa).

The RING-CH-type zinc finger occupies 63–123 (SPFNDRPMCR…ELCHFRFAVE (61 aa)). The Zn(2+) site is built by Cys71, Cys74, Cys87, Cys89, His97, Cys100, Cys113, and Cys116. A run of 2 helical transmembrane segments spans residues 145 to 165 (LFGD…SGWL) and 180 to 200 (LEAV…LFWT).

In terms of assembly, interacts with MARCHF2 and STX6.

The protein localises to the cytoplasmic vesicle membrane. It is found in the early endosome membrane. The catalysed reaction is S-ubiquitinyl-[E2 ubiquitin-conjugating enzyme]-L-cysteine + [acceptor protein]-L-lysine = [E2 ubiquitin-conjugating enzyme]-L-cysteine + N(6)-ubiquitinyl-[acceptor protein]-L-lysine.. Its pathway is protein modification; protein ubiquitination. E3 ubiquitin-protein ligase which may be involved in endosomal trafficking. E3 ubiquitin ligases accept ubiquitin from an E2 ubiquitin-conjugating enzyme in the form of a thioester and then directly transfer the ubiquitin to targeted substrates. The chain is E3 ubiquitin-protein ligase MARCHF3 (Marchf3) from Mus musculus (Mouse).